The following is a 512-amino-acid chain: Respiratory nitrate reductase 1 beta chain (512 aa).

4Fe-4S ferredoxin-type domains follow at residues 7–35 (VGMV…SREG), 175–206 (TFMM…KREE), and 208–237 (GIVL…FNWK). 7 residues coordinate [4Fe-4S] cluster: Cys-16, Cys-19, Cys-22, Cys-26, Cys-184, Cys-187, and Cys-192. The [3Fe-4S] cluster site is built by Cys-196, Cys-217, and Cys-223. Residues Cys-227, Cys-244, Cys-247, Cys-259, and Cys-263 each coordinate [4Fe-4S] cluster.

In terms of assembly, dimer of heterotrimers each composed of an alpha, a beta and a gamma chain. Alpha and beta are catalytic chains; gamma chains are involved in binding the enzyme complex to the cytoplasmic membrane. The cofactor is [4Fe-4S] cluster. [3Fe-4S] cluster serves as cofactor.

The protein resides in the cell membrane. It catalyses the reaction nitrate + a quinol = a quinone + nitrite + H2O. Its function is as follows. The nitrate reductase enzyme complex allows E.coli to use nitrate as an electron acceptor during anaerobic growth. The beta chain is an electron transfer unit containing four cysteine clusters involved in the formation of iron-sulfur centers. Electrons are transferred from the gamma chain to the molybdenum cofactor of the alpha subunit. This chain is Respiratory nitrate reductase 1 beta chain (narH), found in Escherichia coli (strain K12).